The sequence spans 260 residues: Type II methyltransferase M1.MboII (260 aa).

S-adenosyl-L-methionine-binding positions include cysteine 12, aspartate 30, lysine 197, serine 223–threonine 225, and aspartate 241–methionine 242.

Belongs to the N(4)/N(6)-methyltransferase family. In terms of assembly, at low concentration exists as a monomer and homodimer. Probably binds to DNA as a monomer.

The enzyme catalyses a 2'-deoxyadenosine in DNA + S-adenosyl-L-methionine = an N(6)-methyl-2'-deoxyadenosine in DNA + S-adenosyl-L-homocysteine + H(+). A beta subtype methylase that recognizes the double-stranded sequence 5'-GAAGA-3', methylates A-5 on the top strand, and protects the DNA from cleavage by the MboII endonuclease. It is not known if the cytosine of the complementary sequence TCTTC is also methylated by this enzyme. In Moraxella bovis, this protein is Type II methyltransferase M1.MboII.